Here is a 621-residue protein sequence, read N- to C-terminus: Kininogen-1 (621 aa).

A signal peptide spans 1–18; it reads MKLITILFLCSRLLPSLT. Positions 27–131 constitute a Cystatin kininogen-type 1 domain; sequence CNDQDVFKAV…IQTCLITPAE (105 aa). Cystine bridges form between Cys-27–Cys-591, Cys-82–Cys-93, Cys-106–Cys-125, Cys-141–Cys-144, Cys-205–Cys-217, Cys-228–Cys-247, Cys-263–Cys-266, Cys-327–Cys-339, and Cys-350–Cys-369. Residues Asn-47 and Asn-87 are each glycosylated (N-linked (GlcNAc...) asparagine). Thr-136 is a glycosylation site (O-linked (GalNAc...) threonine; partial). The region spanning 150–253 is the Cystatin kininogen-type 2 domain; the sequence is TKSPDLEPVL…SQKCDLYPVK (104 aa). N-linked (GlcNAc...) asparagine glycosylation is found at Asn-168 and Asn-169. A glycan (N-linked (GlcNAc...) asparagine; partial) is linked at Asn-197. Asn-204 is a glycosylation site (N-linked (GlcNAc...) asparagine). The Cystatin kininogen-type 3 domain maps to 272–375; that stretch reads VDSPDLEEPL…TVNCQPLGQT (104 aa). Residue Ser-331 is modified to Phosphoserine. Residues 396–497 are disordered; that stretch reads EGSTTVSLPH…GKNNGKHYDW (102 aa). An O-linked (GalNAc...) serine glycan is attached at Ser-398. Thr-399 and Thr-400 each carry an O-linked (GalNAc...) threonine glycan. O-linked (GalNAc...) serine glycosylation occurs at Ser-406. Over residues 444 to 492 the composition is skewed to basic residues; sequence GHKHKHDQGHGHHGSHGLGHGHQKQHGLGHGHKHGHGHGKHKNKGKNNG. Ser-512 carries an O-linked (GalNAc...) serine glycan. O-linked (GalNAc...) threonine glycosylation is found at Thr-520, Thr-524, Thr-536, Thr-548, Thr-553, and Thr-570. Ser-581 is a glycosylation site (O-linked (GalNAc...) serine).

Post-translationally, bradykinin is released from kininogen by plasma kallikrein. In terms of processing, phosphorylated by FAM20C in the extracellular medium. Bradykinin is inactivated by ACE, which removes the dipeptide Arg-Phe from its C-terminus. As to expression, plasma.

The protein localises to the secreted. It is found in the extracellular space. In terms of biological role, kininogens are inhibitors of thiol proteases. HMW-kininogen plays an important role in blood coagulation by helping to position optimally prekallikrein and factor XI next to factor XII; HMW-kininogen inhibits the thrombin- and plasmin-induced aggregation of thrombocytes. LMW-kininogen inhibits the aggregation of thrombocytes. LMW-kininogen is in contrast to HMW-kininogen not involved in blood clotting. The active peptide bradykinin is a potent vasodilatator that is released from HMW-kininogen shows a variety of physiological effects: (A) influence in smooth muscle contraction, (B) induction of hypotension, (C) natriuresis and diuresis, (D) decrease in blood glucose level, (E) it is a mediator of inflammation and causes (E1) increase in vascular permeability, (E2) stimulation of nociceptors (4E3) release of other mediators of inflammation (e.g. prostaglandins), (F) it has a cardioprotective effect (directly via bradykinin action, indirectly via endothelium-derived relaxing factor action). In Bos taurus (Bovine), this protein is Kininogen-1 (KNG1).